Consider the following 299-residue polypeptide: Acetylglutamate kinase (299 aa).

Residues 64–65 (GG), arginine 86, and asparagine 197 each bind substrate.

It belongs to the acetylglutamate kinase family. ArgB subfamily.

The protein localises to the cytoplasm. The enzyme catalyses N-acetyl-L-glutamate + ATP = N-acetyl-L-glutamyl 5-phosphate + ADP. It functions in the pathway amino-acid biosynthesis; L-arginine biosynthesis; N(2)-acetyl-L-ornithine from L-glutamate: step 2/4. In terms of biological role, catalyzes the ATP-dependent phosphorylation of N-acetyl-L-glutamate. The chain is Acetylglutamate kinase from Persephonella marina (strain DSM 14350 / EX-H1).